The chain runs to 311 residues: MSVIRRLAAVLRQSDSGISAFLVTAPRKYKVYKIPKRTTGFRVIAQPAKGLKDIQRAFVQLYNFPVHDASMAYMKGKGIRDNAAAHAGNQYLLKADLEDFFNSITPAIFWRCIEMSSALTPQFEPQDKFFIEKILFWQPIKHRKTKLILSVGAPSSPVISNFCMYEFDNRIHAACNKLEITYTRYADDLTFSCNIPNVLKAVPSTIEALLKDLFGSELRLNHSKTVFSSKAHNRHVTGVTINNEETLSLGRDRKRFIKHLINQYKYGLLDNEDKAYLTGLLAFASHIEPGFITRMNEKYSLELMGRLRGQR.

Positions aspartate 15–isoleucine 241 constitute a Reverse transcriptase domain. 3 residues coordinate Mg(2+): aspartate 96, aspartate 187, and aspartate 188.

This sequence belongs to the bacterial reverse transcriptase family.

It carries out the reaction DNA(n) + a 2'-deoxyribonucleoside 5'-triphosphate = DNA(n+1) + diphosphate. Reverse transcriptase (RT) component of antiviral defense system retron Ec78, composed of a non-coding RNA (ncRNA), this reverse transcriptase (RT), a probable ATPase and a putative HNH endonuclease. Expression of retron Ec78 confers protection against bacteriophage T5. At multiplicity of infection (MOI) of 0.02 cultures slow growth when infected with T5 but do not collapse, at MOI 2 cultures enter growth stasis. Responsible for synthesis of msDNA-Ec78 (a linear ssDNA with a 5'-terminal phosphate residue). Unlike most known msDNAs the mature product does not have an RNA component. The retron transcript serves as primer and template for the reaction, and codes for the RT. Not mutagenic when cloned in E.coli. It is thought to be synthesized as a branched RNA with a 2',5'-phosphodiester linkage to ssDNA; the linkage is cleaved endonucleolytically by ExoVII (xseA-xseB) leaving the observed mature 5'-ssDNA terminus. Overexpression of the ncRNA and RT, which leads to increased levels of msDNA, is not mutagenic in vivo. As the stem in the msDNA does not have a mismatch it probably does not bind or sequester MutS and/or MutL. In Escherichia coli, this protein is Retron Ec78 reverse transcriptase.